Consider the following 293-residue polypeptide: Cytidine deaminase (293 aa).

CMP/dCMP-type deaminase domains lie at 47–166 (EDRA…FGPA) and 186–293 (ESED…YQAV). 88 to 90 (NME) lines the substrate pocket. Histidine 101 lines the Zn(2+) pocket. Glutamate 103 serves as the catalytic Proton donor. Zn(2+) contacts are provided by cysteine 128 and cysteine 131.

The protein belongs to the cytidine and deoxycytidylate deaminase family. In terms of assembly, homodimer. Zn(2+) serves as cofactor.

It catalyses the reaction cytidine + H2O + H(+) = uridine + NH4(+). The enzyme catalyses 2'-deoxycytidine + H2O + H(+) = 2'-deoxyuridine + NH4(+). This enzyme scavenges exogenous and endogenous cytidine and 2'-deoxycytidine for UMP synthesis. This chain is Cytidine deaminase, found in Aeromonas salmonicida (strain A449).